Reading from the N-terminus, the 638-residue chain is Chaperone protein DnaK (638 aa).

Threonine 198 is subject to Phosphothreonine; by autocatalysis. Residues 602–638 (QAKSQAQGGEEAQAKDAGQSNDDVVDAEFEEVKDDKK) are disordered. The segment covering 624–638 (DVVDAEFEEVKDDKK) has biased composition (acidic residues).

The protein belongs to the heat shock protein 70 family.

In terms of biological role, acts as a chaperone. This chain is Chaperone protein DnaK, found in Shewanella denitrificans (strain OS217 / ATCC BAA-1090 / DSM 15013).